The following is a 368-amino-acid chain: Chaperone protein DnaJ (368 aa).

The J domain occupies 5-70; it reads DYYQVLGVPR…KKRKLYDTHG (66 aa). The segment at 124-201 adopts a CR-type zinc-finger fold; sequence GVERQIQIPT…CNGAGRVEDH (78 aa). The Zn(2+) site is built by cysteine 137, cysteine 140, cysteine 153, cysteine 156, cysteine 175, cysteine 178, cysteine 189, and cysteine 192. 4 CXXCXGXG motif repeats span residues 137–144, 153–160, 175–182, and 189–196; these read CTHCHGSG, CGTCRGSG, CPHCGGRG, and CKVCNGAG.

This sequence belongs to the DnaJ family. As to quaternary structure, homodimer. The cofactor is Zn(2+).

It is found in the cytoplasm. Participates actively in the response to hyperosmotic and heat shock by preventing the aggregation of stress-denatured proteins and by disaggregating proteins, also in an autonomous, DnaK-independent fashion. Unfolded proteins bind initially to DnaJ; upon interaction with the DnaJ-bound protein, DnaK hydrolyzes its bound ATP, resulting in the formation of a stable complex. GrpE releases ADP from DnaK; ATP binding to DnaK triggers the release of the substrate protein, thus completing the reaction cycle. Several rounds of ATP-dependent interactions between DnaJ, DnaK and GrpE are required for fully efficient folding. Also involved, together with DnaK and GrpE, in the DNA replication of plasmids through activation of initiation proteins. In Xylella fastidiosa (strain M23), this protein is Chaperone protein DnaJ.